The chain runs to 681 residues: Cell cycle checkpoint protein RAD17 (681 aa).

Residues 17–25 (DWVDPSFDD) carry the RAD1-binding motif motif. A disordered region spans residues 42–61 (VNNSSHRRKNGPSTLESSRF). A Phosphothreonine modification is found at threonine 55. A phosphoserine mark is found at serine 71 and serine 86. 137–144 (GPPGCGKT) is a binding site for ATP. 2 disordered regions span residues 344-377 (SSKG…KPDR) and 606-681 (HGMI…SDGT). Phosphoserine is present on serine 359. The segment at 432–681 (LVEPEEVVEM…IIEDYESDGT (250 aa)) is interaction with MCM7. The segment covering 631–662 (EPTQATVPETWSLPLSQNSASELPASQPQPFS) has biased composition (polar residues). Threonine 633 carries the phosphothreonine; by ATM modification. Phosphoserine; by ATR and ATM occurs at positions 646 and 656. The segment covering 666 to 681 (DMEENIIIEDYESDGT) has biased composition (acidic residues).

Belongs to the rad17/RAD24 family. Part of a DNA-binding complex containing RFC2, RFC3, RFC4 and RFC5. Interacts with RAD1 and RAD9 within the 9-1-1 (RAD1-RAD9-HUS1) complex. Interacts with RAD9B, POLE, SNU13 and MCM7. DNA damage promotes interaction with ATR or ATM and disrupts interaction with the 9-1-1 (RAD1-RAD9-HUS1) complex. Interacts (when phosphorylated) with NBN; promoting recruitment of the MRN complex to DNA damage sites. Post-translationally, phosphorylation on Ser-646 and Ser-656 is cell cycle-regulated, enhanced by genotoxic stress, and required for activation of checkpoint signaling. Phosphorylation is mediated by ATR upon UV or replication arrest, whereas it may be mediated both by ATR and ATM upon ionizing radiation. Phosphorylation on both sites is required for interaction with RAD1 but dispensable for interaction with RFC3 or RFC4. Phosphorylation at Thr-633 by ATM in response to DNA damage promotes interaction with NBN and recruitment of the MRN complex to DNA damage sites. As to expression, overexpressed in various cancer cell lines and in colon carcinoma (at protein level). Isoform 2 and isoform 3 are the most abundant isoforms in non irradiated cells (at protein level). Ubiquitous at low levels. Highly expressed in testis, where it is expressed within the germinal epithelium of the seminiferous tubuli. Weakly expressed in seminomas (testicular tumors).

Its subcellular location is the nucleus. It localises to the chromosome. In terms of biological role, essential for sustained cell growth, maintenance of chromosomal stability, and ATR-dependent checkpoint activation upon DNA damage. Has a weak ATPase activity required for binding to chromatin. Participates in the recruitment of the 9-1-1 (RAD1-RAD9-HUS1) complex and RHNO1 onto chromatin, and in CHEK1 activation. Involved in homologous recombination by mediating recruitment of the MRN complex to DNA damage sites. May also serve as a sensor of DNA replication progression. This chain is Cell cycle checkpoint protein RAD17, found in Homo sapiens (Human).